The chain runs to 515 residues: Putative ribose/galactose/methyl galactoside import ATP-binding protein (515 aa).

ABC transporter domains are found at residues 26-262 (LEVA…VGRE) and 272-511 (VALG…KIMD). ATP is bound at residue 58-65 (GENGAGKS).

Belongs to the ABC transporter superfamily. Carbohydrate importer 2 (CUT2) (TC 3.A.1.2) family.

It localises to the cell inner membrane. It carries out the reaction D-ribose(out) + ATP + H2O = D-ribose(in) + ADP + phosphate + H(+). It catalyses the reaction D-galactose(out) + ATP + H2O = D-galactose(in) + ADP + phosphate + H(+). Functionally, part of an ABC transporter complex involved in carbohydrate import. Could be involved in ribose, galactose and/or methyl galactoside import. Responsible for energy coupling to the transport system. The chain is Putative ribose/galactose/methyl galactoside import ATP-binding protein from Hahella chejuensis (strain KCTC 2396).